Reading from the N-terminus, the 548-residue chain is Chaperonin GroEL (548 aa).

Residues 30 to 33 (TLGP), Lys-51, 87 to 91 (DGTTT), Gly-415, 479 to 481 (NAA), and Asp-495 contribute to the ATP site.

The protein belongs to the chaperonin (HSP60) family. As to quaternary structure, forms a cylinder of 14 subunits composed of two heptameric rings stacked back-to-back. Interacts with the co-chaperonin GroES.

The protein localises to the cytoplasm. It catalyses the reaction ATP + H2O + a folded polypeptide = ADP + phosphate + an unfolded polypeptide.. Functionally, together with its co-chaperonin GroES, plays an essential role in assisting protein folding. The GroEL-GroES system forms a nano-cage that allows encapsulation of the non-native substrate proteins and provides a physical environment optimized to promote and accelerate protein folding. This chain is Chaperonin GroEL, found in Aliivibrio fischeri (strain MJ11) (Vibrio fischeri).